Here is a 223-residue protein sequence, read N- to C-terminus: Adenylate kinase (223 aa).

10 to 15 (GSGKGT) contacts ATP. The interval 30-59 (ESGAIFRKHIGGGTELGMKAKEYIDKGELV) is NMP. Residues Ser31, Arg36, 57–59 (ELV), 84–87 (GFPR), and Gln91 contribute to the AMP site. The interval 125-164 (GRRLCENDPNHPNNKFIDAIKPDGDKCRVCGGALSERADD) is LID. Arg126 serves as a coordination point for ATP. Residues Arg161 and Arg173 each coordinate AMP. An ATP-binding site is contributed by Gly209.

The protein belongs to the adenylate kinase family. As to quaternary structure, monomer.

The protein localises to the cytoplasm. The catalysed reaction is AMP + ATP = 2 ADP. It functions in the pathway purine metabolism; AMP biosynthesis via salvage pathway; AMP from ADP: step 1/1. Catalyzes the reversible transfer of the terminal phosphate group between ATP and AMP. Plays an important role in cellular energy homeostasis and in adenine nucleotide metabolism. The protein is Adenylate kinase of Maridesulfovibrio salexigens (strain ATCC 14822 / DSM 2638 / NCIMB 8403 / VKM B-1763) (Desulfovibrio salexigens).